Reading from the N-terminus, the 205-residue chain is Small ribosomal subunit protein uS4 (205 aa).

A compositionally biased stretch (basic and acidic residues) spans 1–16 (MSKRETTKYKIDRRMG). The interval 1-46 (MSKRETTKYKIDRRMGENIWGRPKSPVNRRDYGPGQHGQRRKGKLS) is disordered. Positions 94–157 (SRLDAVIYRA…KQLVLVLESV (64 aa)) constitute an S4 RNA-binding domain.

The protein belongs to the universal ribosomal protein uS4 family. As to quaternary structure, part of the 30S ribosomal subunit. Contacts protein S5. The interaction surface between S4 and S5 is involved in control of translational fidelity.

Its function is as follows. One of the primary rRNA binding proteins, it binds directly to 16S rRNA where it nucleates assembly of the body of the 30S subunit. In terms of biological role, with S5 and S12 plays an important role in translational accuracy. The protein is Small ribosomal subunit protein uS4 of Bartonella henselae (strain ATCC 49882 / DSM 28221 / CCUG 30454 / Houston 1) (Rochalimaea henselae).